Reading from the N-terminus, the 342-residue chain is Alpha-tocopherol transfer protein-like (342 aa).

The interval 1–31 (MSEESDSLRTSPSVASLSENELPPPPEPPGY) is disordered. The segment covering 8-19 (LRTSPSVASLSE) has biased composition (polar residues). The 166-residue stretch at 117-282 (KPSALKDVLA…EYGGTAGELD (166 aa)) folds into the CRAL-TRIO domain.

May act as a protein that binds a hydrophobic ligand. This Homo sapiens (Human) protein is Alpha-tocopherol transfer protein-like (TTPAL).